Here is a 1683-residue protein sequence, read N- to C-terminus: A-kinase anchor protein SPHKAP (1683 aa).

Polar residues-rich tracts occupy residues 1-14 (MDVN…SNVE) and 289-301 (AENT…NPSA). Disordered regions lie at residues 1-30 (MDVN…ITSS), 275-320 (RMPS…ATNY), and 582-601 (LLPT…LVTE). The PKA-RII subunit binding domain stretch occupies residues 910–927 (FAEELAETVVSMATEIAA). Residues 960–983 (LKRKKENSGTGSTVRKHKPPRLSE) form a disordered region. Phosphoserine occurs at positions 1006, 1066, 1088, 1101, 1102, 1105, 1240, and 1269. Disordered stretches follow at residues 1359–1387 (VTEG…PTRE) and 1415–1518 (ETDQ…DTSS). Residues 1362–1371 (GNCSPVSSPS) show a composition bias toward polar residues. The segment covering 1469-1490 (LETREELEVDVLKEDITLDESR) has biased composition (basic and acidic residues). A compositionally biased stretch (low complexity) spans 1492–1504 (PPSSSEESTGSWS).

This sequence belongs to the AKAP110 family. Interacts (via the PKA-RII subunit binding domain) with the RI subunit of PKA. Interacts with SPHK1; the interaction greatly reduces SPHK1 activity. Abundant in heart ventricle (at protein level).

The protein resides in the cytoplasm. In terms of biological role, anchoring protein that binds preferentially to the type I regulatory subunit of c-AMP-dependent protein kinase (PKA type I) and targets it to distinct subcellular compartments. May act as a converging factor linking cAMP and sphingosine signaling pathways. Plays a regulatory role in the modulation of SPHK1. The chain is A-kinase anchor protein SPHKAP (Sphkap) from Rattus norvegicus (Rat).